Consider the following 378-residue polypeptide: Cytochrome b (378 aa).

4 consecutive transmembrane segments (helical) span residues 34 to 54, 78 to 99, 114 to 134, and 179 to 199; these read FGSLLGLCLMLQILTGLFLAM, WFLRICHANGASFFFACLFIHV, WNTGVIILFLTMATGFLGYVL, and FFTFHFIFPFIILALMMIHLL. Residues His-84 and His-98 each contribute to the heme b site. Heme b-binding residues include His-183 and His-197. Residue His-202 coordinates a ubiquinone. 4 consecutive transmembrane segments (helical) span residues 227–247, 289–309, 321–341, and 348–368; these read YKDIFGFIVFLWILVTFIWKF, LGGVIALVLSIAILLILPFTH, LNQILFWNMVIVASLLTWIGA, and YILTGQILTVLYFSYFIINPL.

This sequence belongs to the cytochrome b family. In terms of assembly, the main subunits of complex b-c1 are: cytochrome b, cytochrome c1 and the Rieske protein. Heme b is required as a cofactor.

It localises to the mitochondrion inner membrane. Component of the ubiquinol-cytochrome c reductase complex (complex III or cytochrome b-c1 complex) that is part of the mitochondrial respiratory chain. The b-c1 complex mediates electron transfer from ubiquinol to cytochrome c. Contributes to the generation of a proton gradient across the mitochondrial membrane that is then used for ATP synthesis. In Anopheles gambiae (African malaria mosquito), this protein is Cytochrome b (mt:Cyt-b).